The sequence spans 362 residues: uncharacterized protein (362 aa).

This is an uncharacterized protein from Escherichia coli (strain K12).